Here is a 410-residue protein sequence, read N- to C-terminus: Regulator of microtubule dynamics protein 2 (410 aa).

The chain crosses the membrane as a helical span at residues 9 to 28; it reads LILGIMAGTAGISLLAFWYH. S51 carries the phosphoserine modification. A coiled-coil region spans residues 69 to 110; the sequence is QRRQLQILEKLNELLTNMEELKEEIRFLKETIPKLEECIQDE. A disordered region spans residues 120–151; it reads ISPQHRARKKKGTTVQRSATSNSSEEAESEGG. Position 121 is a phosphoserine (S121). The span at 121–131 shows a compositional bias: basic residues; the sequence is SPQHRARKKKG. T139 is modified (phosphothreonine). A Phosphotyrosine modification is found at Y152. A phosphothreonine mark is found at T154 and T157.

The protein belongs to the RMDN family. In terms of assembly, interacts with microtubules.

It localises to the membrane. Its subcellular location is the cytoplasm. The protein resides in the cytoskeleton. The protein localises to the spindle. It is found in the spindle pole. The chain is Regulator of microtubule dynamics protein 2 (Rmdn2) from Mus musculus (Mouse).